A 2013-amino-acid polypeptide reads, in one-letter code: Centrosomal protein 224 (2013 aa).

HEAT repeat units follow at residues 115 to 153 (TIEADSAEPVVEALLKGTSSTSPKILLASLAALTQALKT), 158 to 196 (QIPVKLILKQFSPWFENRDKGIRDQASELFIEIYRWIGK), 200 to 238 (PLISEALTPIQLKALQDQFEKLPTDPAVPLKYTRSEAAK), 348 to 386 (TSYVKPFITPILEKFKEKKTSVLQSVHTTMDSLVGKSIS), and 427 to 465 (TKVTKQLTKIFMEALNDTDSNIRDNASKAFAALGGIIGE). Residues 512 to 557 (PVSSSNKKPAAATGNSKSSSTTTPTGRSSNSSPLPPPPSSSDDIKN) form a disordered region. Low complexity predominate over residues 524 to 543 (TGNSKSSSTTTPTGRSSNSS). HEAT repeat units lie at residues 724-762 (IQQLKPLLDYTKQCLESTNPDVKKSAIKLLCTIKINIGA), 816-854 (VDISVKLTPAIITNLSDANWKTRSDALDEIERIIIDANR), 857-895 (QPKLGGLIPALKNRLTDNNQKCTITTLNIIGMLSQAMGG), 899-937 (EKHARLLIPGILLLLGDSKKPVRDAVISCMNVIVQSDLG), and 977-1015 (PSEINTLAKGIISCLQDKSAEIRSLADNLLSILCTQIPL). The tract at residues 1043 to 1109 (KTGQPIPPPS…QQQQRRSILQ (67 aa)) is disordered. The segment covering 1053–1106 (KTKQSTSSSSSSSSTTSQQSSTPSSPQPIRQQQQQQQQQPTQPQQQQQQQQRRS) has biased composition (low complexity). 3 HEAT repeats span residues 1240 to 1279 (EYEASCLVPILLEKSGSATNEQIKQIFKQSIQQLEELCLP), 1281 to 1314 (VLFRFAIEMVTSQNWRTRVEVLNVMASIIDKNGA), and 1317 to 1353 (CGNLKVVIPLITQNLNDSQSKQSSLLCLNKLYSHIKD). Composition is skewed to low complexity over residues 1372–1406 (NNNNNNNNNNNNNNNNNNNNVQQQQQQQQQQQQQQ), 1695–1735 (NRIS…INSS), and 1746–1796 (SNNT…TLST). Disordered regions lie at residues 1372–1413 (NNNN…SLST), 1695–1809 (NRIS…YSGK), 1905–1949 (NQPS…IAPQ), and 1966–1995 (TLNPDQNSGSNNNNSHQNSPSTSSSNDLNS). Basic and acidic residues predominate over residues 1799-1809 (INKEPRDYSGK). A compositionally biased stretch (low complexity) spans 1913–1939 (NNNNNNNNNNNNNNNNNINNNNNNNNN). Polar residues predominate over residues 1940-1949 (SGGNENIAPQ). The span at 1967–1995 (LNPDQNSGSNNNNSHQNSPSTSSSNDLNS) shows a compositional bias: low complexity.

Belongs to the TOG/XMAP215 family. In terms of assembly, interacts with eb1 at the microtubule tip, centrosome and kinetochore. Interacts with lis1 in the cortical attachment of microtubules.

Its subcellular location is the cytoplasm. It is found in the cytoskeleton. The protein resides in the microtubule organizing center. It localises to the centrosome. The protein localises to the chromosome. Its subcellular location is the centromere. It is found in the kinetochore. Involved in regulation of microtubule dynamics. Regulates the interaction of microtubules tips with the centrosome and cell cortex. The protein is Centrosomal protein 224 (mtaA) of Dictyostelium discoideum (Social amoeba).